Reading from the N-terminus, the 621-residue chain is Phosphatidylinositol-3,5-bisphosphate 3-phosphatase MTMR6 (621 aa).

A GRAM domain is found at 1 to 101 (MEHIRTTKVE…YNSLLQLSKQ (101 aa)). Positions 2–141 (EHIRTTKVEQ…EEYKRMGVPN (140 aa)) are interaction with RAB1B. Tyrosine 108 carries the post-translational modification Phosphotyrosine. One can recognise a Myotubularin phosphatase domain in the interval 124–499 (GWQLIDLAEE…FNFKFWRNMY (376 aa)). Residues asparagine 248, asparagine 273, and isoleucine 274 each contribute to the a 1,2-diacyl-sn-glycero-3-phospho-(1D-myo-inositol-3,5-bisphosphate) site. 3 residues coordinate a 1,2-diacyl-sn-glycero-3-phospho-(1D-myo-inositol-3-phosphate): asparagine 248, asparagine 273, and isoleucine 274. Cysteine 336 acts as the Phosphocysteine intermediate in catalysis. A 1,2-diacyl-sn-glycero-3-phospho-(1D-myo-inositol-3,5-bisphosphate) contacts are provided by serine 337, aspartate 338, glycine 339, tryptophan 340, aspartate 341, arginine 342, lysine 378, and arginine 382. The a 1,2-diacyl-sn-glycero-3-phospho-(1D-myo-inositol-3-phosphate) site is built by serine 337, aspartate 338, glycine 339, tryptophan 340, aspartate 341, and arginine 342. Arginine 382 provides a ligand contact to a 1,2-diacyl-sn-glycero-3-phospho-(1D-myo-inositol-3-phosphate). Residues serine 556, serine 561, serine 589, and serine 611 each carry the phosphoserine modification.

This sequence belongs to the protein-tyrosine phosphatase family. Non-receptor class myotubularin subfamily. In terms of assembly, homodimer. Heterodimer (via C-terminus) with MTMR9 (via C-terminus). Interacts with ALKBH4. Interacts with KCNN4. Interacts (via GRAM domain) with RAB1B (in GDP-bound form); the interaction regulates MTMR6 recruitment to the endoplasmic reticulum-Golgi intermediate compartment. In terms of tissue distribution, expressed in CD4+ T-cells.

It localises to the cytoplasm. The protein localises to the endoplasmic reticulum-Golgi intermediate compartment. It is found in the endoplasmic reticulum. The protein resides in the cell projection. Its subcellular location is the ruffle membrane. It localises to the perinuclear region. It catalyses the reaction a 1,2-diacyl-sn-glycero-3-phospho-(1D-myo-inositol-3,5-bisphosphate) + H2O = a 1,2-diacyl-sn-glycero-3-phospho-(1D-myo-inositol-5-phosphate) + phosphate. The catalysed reaction is a 1,2-diacyl-sn-glycero-3-phospho-(1D-myo-inositol-3-phosphate) + H2O = a 1,2-diacyl-sn-glycero-3-phospho-(1D-myo-inositol) + phosphate. It carries out the reaction 1,2-dioctanoyl-sn-glycero-3-phospho-(1D-myo-inositol-3,5-bisphosphate) + H2O = 1,2-dioctanoyl-sn-glycero-3-phospho-(1D-myo-inositol-5-phosphate) + phosphate. The enzyme catalyses 1,2-dioctanoyl-sn-glycero-3-phospho-(1-D-myo-inositol-3-phosphate) + H2O = 1,2-dioctanoyl-sn-glycero-3-phospho-(1D-myo-inositol) + phosphate. With respect to regulation, allosterically activated by phosphatidylserine and/or phosphatidylinositol 4-phosphate (PtdIns(4)P), and phosphatidylinositol 5-phosphate (PtdIns(5)P). Interaction with MTMR9 increases catalytic activity towards phosphatidylinositol 3,5-bisphosphate. Functionally, lipid phosphatase that specifically dephosphorylates the D-3 position of phosphatidylinositol 3-phosphate and phosphatidylinositol 3,5-bisphosphate, generating phosphatidylinositol and phosphatidylinositol 5-phosphate. Binds with high affinity to phosphatidylinositol 3,5-bisphosphate (PtdIns(3,5)P2) but also to phosphatidylinositol 3-phosphate (PtdIns(3)P), phosphatidylinositol 4-phosphate (PtdIns(4)P), and phosphatidylinositol 5-phosphate (PtdIns(5)P), phosphatidic acid and phosphatidylserine. Negatively regulates ER-Golgi protein transport. Probably in association with MTMR9, plays a role in the late stages of macropinocytosis by dephosphorylating phosphatidylinositol 3-phosphate in membrane ruffles. Acts as a negative regulator of KCNN4/KCa3.1 channel activity in CD4(+) T-cells possibly by decreasing intracellular levels of phosphatidylinositol 3-phosphate. Negatively regulates proliferation of reactivated CD4(+) T-cells. In complex with MTMR9, negatively regulates DNA damage-induced apoptosis. The formation of the MTMR6-MTMR9 complex stabilizes both MTMR6 and MTMR9 protein levels. This is Phosphatidylinositol-3,5-bisphosphate 3-phosphatase MTMR6 from Homo sapiens (Human).